A 117-amino-acid polypeptide reads, in one-letter code: UPF0102 protein YPN_3432 (117 aa).

It belongs to the UPF0102 family.

This is UPF0102 protein YPN_3432 from Yersinia pestis bv. Antiqua (strain Nepal516).